Here is a 354-residue protein sequence, read N- to C-terminus: DNA integrity scanning protein DisA (354 aa).

Residues 6-144 (GMKIKDTLKI…GDIKYVLRDS (139 aa)) enclose the DAC domain. Residues glycine 73, leucine 91, and 104 to 108 (TRHRT) contribute to the ATP site.

Belongs to the DisA family. As to quaternary structure, homooctamer. The cofactor is Mg(2+).

It carries out the reaction 2 ATP = 3',3'-c-di-AMP + 2 diphosphate. Its function is as follows. Participates in a DNA-damage check-point that is active prior to asymmetric division when DNA is damaged. DisA forms globular foci that rapidly scan along the chromosomes during sporulation, searching for lesions. When a lesion is present, DisA pauses at the lesion site. This triggers a cellular response that culminates in a temporary block in sporulation initiation. Also has diadenylate cyclase activity, catalyzing the condensation of 2 ATP molecules into cyclic di-AMP (c-di-AMP). c-di-AMP acts as a signaling molecule that couples DNA integrity with progression of sporulation. The rise in c-di-AMP level generated by DisA while scanning the chromosome, operates as a positive signal that advances sporulation; upon encountering a lesion, the DisA focus arrests at the damaged site and halts c-di-AMP synthesis. This chain is DNA integrity scanning protein DisA, found in Clostridium botulinum (strain Eklund 17B / Type B).